The primary structure comprises 803 residues: Zinc finger X-linked protein ZXDB (803 aa).

Disordered stretches follow at residues 1 to 91 (MEIP…GGDD), 120 to 140 (EAEE…AGPT), and 218 to 260 (AAHP…GPRG). Residues 13 to 26 (LQGGGGGGIPAGGG) are compositionally biased toward gly residues. 10 consecutive C2H2-type zinc fingers follow at residues 271 to 295 (YLCP…LLTH), 304 to 328 (FKCP…LQSH), 334 to 358 (FGCP…MKGH), 364 to 386 (FKCE…QRSH), 393 to 417 (YQCA…NRAH), 424 to 448 (FSCS…LRSH), 454 to 478 (FLCD…KRKH), 484 to 508 (FMCP…SITH), 514 to 538 (FVCP…SKKH), and 547 to 572 (SRCP…VKRH). A required for interaction with ZXDC region spans residues 271–577 (YLCPEAQCGQ…MVKRHKVGQD (307 aa)). Residues 576–703 (QDLLAQLEAA…NMDEVSSVSV (128 aa)) are required for transcriptional activation.

This sequence belongs to the ZXD family. As to quaternary structure, self-associates. Interacts with ZXDC and CIITA. In terms of tissue distribution, may be expressed in brain, heart, kidney, liver, lung, muscle and placenta.

It localises to the nucleus. In terms of biological role, cooperates with CIITA to promote transcription of MHC class I and MHC class II genes. This Homo sapiens (Human) protein is Zinc finger X-linked protein ZXDB (ZXDB).